Reading from the N-terminus, the 211-residue chain is Imidazole glycerol phosphate synthase subunit HisH (211 aa).

The Glutamine amidotransferase type-1 domain occupies 1–206 (MIGIIDYGRG…GKWVNEDATV (206 aa)). Cysteine 79 (nucleophile) is an active-site residue. Active-site residues include histidine 181 and glutamate 183.

Heterodimer of HisH and HisF.

Its subcellular location is the cytoplasm. The enzyme catalyses 5-[(5-phospho-1-deoxy-D-ribulos-1-ylimino)methylamino]-1-(5-phospho-beta-D-ribosyl)imidazole-4-carboxamide + L-glutamine = D-erythro-1-(imidazol-4-yl)glycerol 3-phosphate + 5-amino-1-(5-phospho-beta-D-ribosyl)imidazole-4-carboxamide + L-glutamate + H(+). It carries out the reaction L-glutamine + H2O = L-glutamate + NH4(+). It participates in amino-acid biosynthesis; L-histidine biosynthesis; L-histidine from 5-phospho-alpha-D-ribose 1-diphosphate: step 5/9. Its function is as follows. IGPS catalyzes the conversion of PRFAR and glutamine to IGP, AICAR and glutamate. The HisH subunit catalyzes the hydrolysis of glutamine to glutamate and ammonia as part of the synthesis of IGP and AICAR. The resulting ammonia molecule is channeled to the active site of HisF. This is Imidazole glycerol phosphate synthase subunit HisH from Desulfitobacterium hafniense (strain DSM 10664 / DCB-2).